Here is a 520-residue protein sequence, read N- to C-terminus: Cytochrome P450 monooxygenase vrtE (520 aa).

A helical transmembrane segment spans residues 16–36 (ALSLLHYVLGAIFLLLLFHML). N-linked (GlcNAc...) asparagine glycosylation is present at asparagine 137. Heme is bound at residue cysteine 459.

Belongs to the cytochrome P450 family. The cofactor is heme.

It localises to the membrane. It functions in the pathway secondary metabolite biosynthesis; terpenoid biosynthesis. Its function is as follows. Cytochrome P450 monooxygenase; part of the gene cluster that mediates the biosynthesis of viridicatumtoxin, a tetracycline-like fungal meroterpenoid with a unique, fused spirobicyclic ring system. The first step of the pathway is the production of the malonamoyl-CoA starter unit for the polyketide synthase vrtA. The aldolase vrtJ may be involved in the synthesis of the malonamate substrate for malonamoyl-CoA synthetase vrtB. The polyketide synthase vrtA then may utilize the malonamoyl-CoA starter unit, followed by sequential condensation of eight malonyl-CoA units to form the polyketide backbone. The cyclization of the last ring could be mediated by the lactamase-like protein vrtG. The proposed post-PKS tailoring steps are a hydroxylation at C5 catalyzed the cytochrome P450 monooxygenase vrtE, a hydroxylation at C12a catalyzed by VrtH and/or VrtI, and an O-methylation by the O-methyltransferase vrtF. VrtC is then proposed to catalyze the transfer of a geranyl group synthesized by vrtD to the aromatic C ring of the tetracyclic polyketide intermediate of viridicatumtoxin to yield previridicatumtoxin. Finally, the cytochrome P450 monooxygenase vrtK catalyzes the spirocyclization of the geranyl moiety of previridicatumtoxin to afford viridicatumtoxin. This Penicillium aethiopicum protein is Cytochrome P450 monooxygenase vrtE.